Here is a 360-residue protein sequence, read N- to C-terminus: Protein Wnt-2 (360 aa).

Positions 1–25 (MNAPLGGIWLWLPLLLTWLTPEVNS) are cleaved as a signal peptide. Cystine bridges form between C76–C87, C127–C135, C137–C157, C206–C220, C208–C215, C278–C309, C294–C304, C308–C348, C324–C339, C326–C336, and C331–C332. S212 is lipidated: O-palmitoleoyl serine; by PORCN. A glycan (N-linked (GlcNAc...) asparagine) is linked at N295.

It belongs to the Wnt family. Post-translationally, palmitoleoylation is required for efficient binding to frizzled receptors. Depalmitoleoylation leads to Wnt signaling pathway inhibition. As to expression, expressed in brain in the thalamus, in fetal and adult lung and in placenta.

It localises to the secreted. It is found in the extracellular space. Its subcellular location is the extracellular matrix. In terms of biological role, ligand for members of the frizzled family of seven transmembrane receptors. Functions in the canonical Wnt signaling pathway that results in activation of transcription factors of the TCF/LEF family. Functions as a upstream regulator of FGF10 expression. Plays an important role in embryonic lung development. May contribute to embryonic brain development by regulating the proliferation of dopaminergic precursors and neurons. This is Protein Wnt-2 (WNT2) from Homo sapiens (Human).